Consider the following 295-residue polypeptide: 4-diphosphocytidyl-2-C-methyl-D-erythritol kinase (295 aa).

The active site involves Lys-15. 101 to 111 is a binding site for ATP; it reads PIAAGLGGGSS. Asp-143 is a catalytic residue.

Belongs to the GHMP kinase family. IspE subfamily.

The catalysed reaction is 4-CDP-2-C-methyl-D-erythritol + ATP = 4-CDP-2-C-methyl-D-erythritol 2-phosphate + ADP + H(+). Its pathway is isoprenoid biosynthesis; isopentenyl diphosphate biosynthesis via DXP pathway; isopentenyl diphosphate from 1-deoxy-D-xylulose 5-phosphate: step 3/6. Functionally, catalyzes the phosphorylation of the position 2 hydroxy group of 4-diphosphocytidyl-2C-methyl-D-erythritol. The chain is 4-diphosphocytidyl-2-C-methyl-D-erythritol kinase from Caulobacter vibrioides (strain ATCC 19089 / CIP 103742 / CB 15) (Caulobacter crescentus).